The sequence spans 173 residues: Gamma-crystallin S-1 (173 aa).

Beta/gamma crystallin 'Greek key' domains are found at residues 2 to 40 and 41 to 83; these read GKII…RVES and DWWV…RMLP. Residues 84–88 are connecting peptide; the sequence is HTGRS. Beta/gamma crystallin 'Greek key' domains follow at residues 89 to 129 and 130 to 172; these read YRMR…QVMD and GYWI…RRIM.

Belongs to the beta/gamma-crystallin family.

In terms of biological role, crystallins are the dominant structural components of the vertebrate eye lens. This is Gamma-crystallin S-1 (GS-1) from Chiloscyllium indicum (Slender bamboo shark).